We begin with the raw amino-acid sequence, 489 residues long: Zeta-carotene desaturase (489 aa).

The protein belongs to the zeta carotene desaturase family. It depends on NAD(+) as a cofactor. NADP(+) is required as a cofactor. Requires FAD as cofactor.

The catalysed reaction is 9,9'-di-cis-zeta-carotene + 2 a quinone = 7,7',9,9'-tetra-cis-lycopene + 2 a quinol. Its pathway is carotenoid biosynthesis; lycopene biosynthesis. Functionally, catalyzes the conversion of zeta-carotene to lycopene via the intermediary of neurosporene. It carries out two consecutive desaturations (introduction of double bonds) at positions C-7 and C-7'. This is Zeta-carotene desaturase (crtQ) from Synechocystis sp. (strain ATCC 27184 / PCC 6803 / Kazusa).